A 139-amino-acid polypeptide reads, in one-letter code: MGTIRLMHAKLHRVRVSEANVDYVGSITIDRELIERVGILPLEEVDVVNLSNGKRFSTYVFPGHTGEICPNGGAALLCQPGDILIIYAYEQRPRQEVLEKGHFAKVLVADAENRCQQFFEQSLIPRGDGRGVEFSSQEC.

The Schiff-base intermediate with substrate; via pyruvic acid role is filled by serine 26. Residue serine 26 is modified to Pyruvic acid (Ser). Threonine 58 serves as a coordination point for substrate. Tyrosine 59 functions as the Proton donor in the catalytic mechanism. Residue 72 to 74 (GGA) coordinates substrate.

This sequence belongs to the PanD family. In terms of assembly, heterooctamer of four alpha and four beta subunits. Requires pyruvate as cofactor. Post-translationally, is synthesized initially as an inactive proenzyme, which is activated by self-cleavage at a specific serine bond to produce a beta-subunit with a hydroxyl group at its C-terminus and an alpha-subunit with a pyruvoyl group at its N-terminus.

It is found in the cytoplasm. It carries out the reaction L-aspartate + H(+) = beta-alanine + CO2. It participates in cofactor biosynthesis; (R)-pantothenate biosynthesis; beta-alanine from L-aspartate: step 1/1. Functionally, catalyzes the pyruvoyl-dependent decarboxylation of aspartate to produce beta-alanine. This chain is Aspartate 1-decarboxylase, found in Microcystis aeruginosa (strain NIES-843 / IAM M-2473).